Reading from the N-terminus, the 498-residue chain is Glutamate--tRNA ligase (498 aa).

The 'HIGH' region motif lies at 10–20; it reads PSPTGYFHIGG. The 'KMSKS' region motif lies at 252-256; sequence KLSKR. Lysine 255 is an ATP binding site.

It belongs to the class-I aminoacyl-tRNA synthetase family. Glutamate--tRNA ligase type 1 subfamily. In terms of assembly, monomer.

It localises to the cytoplasm. The enzyme catalyses tRNA(Glu) + L-glutamate + ATP = L-glutamyl-tRNA(Glu) + AMP + diphosphate. Its function is as follows. Catalyzes the attachment of glutamate to tRNA(Glu) in a two-step reaction: glutamate is first activated by ATP to form Glu-AMP and then transferred to the acceptor end of tRNA(Glu). The protein is Glutamate--tRNA ligase of Mycoplasmoides gallisepticum (strain R(low / passage 15 / clone 2)) (Mycoplasma gallisepticum).